Consider the following 471-residue polypeptide: 5-hydroxytryptamine receptor 2A (471 aa).

At Met-1 to Leu-80 the chain is on the extracellular side. Asn-8, Asn-38, Asn-44, Asn-51, and Asn-54 each carry an N-linked (GlcNAc...) asparagine glycan. Residues Thr-81 to Met-97 traverse the membrane as a helical segment. The Cytoplasmic portion of the chain corresponds to Ala-98 to Tyr-111. A helical membrane pass occupies residues Phe-112–Tyr-137. Residues Gly-138 to Lys-146 are Extracellular-facing. The helical transmembrane segment at Leu-147–Leu-171 threads the bilayer. A disulfide bridge links Cys-148 with Cys-227. Asp-155 lines the serotonin pocket. A DRY motif; important for ligand-induced conformation changes motif is present at residues Asp-172–Tyr-174. The Cytoplasmic portion of the chain corresponds to Asp-172–Lys-191. A helical membrane pass occupies residues Ala-192–Leu-215. Residues Gln-216–Asp-232 are Extracellular-facing. A helical membrane pass occupies residues Asn-233–Ile-258. Topologically, residues Lys-259–Cys-322 are cytoplasmic. Ser-280 bears the Phosphoserine mark. The chain crosses the membrane as a helical span at residues Lys-323–Ile-348. Asn-343 contributes to the serotonin binding site. An intrachain disulfide couples Cys-349 to Cys-353. The Extracellular portion of the chain corresponds to Cys-349–Asn-356. The helical transmembrane segment at Val-357–Leu-382 threads the bilayer. The short motif at Asn-376–Tyr-380 is the NPxxY motif; important for ligand-induced conformation changes and signaling element. Residues Phe-383–Val-471 lie on the Cytoplasmic side of the membrane. Residues Ser-469 to Val-471 carry the PDZ-binding motif.

Belongs to the G-protein coupled receptor 1 family. In terms of assembly, interacts (via C-terminus) with MPDZ and PATJ. May interact (via C-terminus) with MPP3, PRDX6, DLG4, DLG1, CASK, APBA1 and MAGI2. Interacts with GRM2 and DRD2; this may affect signaling. As to expression, detected in neurons in brain cortex. Detected in adult intestine, especially in mucosal epithelium, longitudinal and circular layers of muscularis externa and myenteric plexuses. Highly expressed in Paneth cells, and detected at lower levels in enterocytes (at protein level). Detected in neurons in the brain cortex.

It is found in the cell membrane. Its subcellular location is the cell projection. The protein resides in the dendrite. It localises to the axon. The protein localises to the cytoplasmic vesicle. It is found in the membrane. Its subcellular location is the caveola. The protein resides in the presynapse. Its activity is regulated as follows. G-protein coupled receptor activity is regulated by lipids: oleamide increases HTR2A-mediated activity. Its function is as follows. G-protein coupled receptor for 5-hydroxytryptamine (serotonin). Also functions as a receptor for various drugs and psychoactive substances, including mescaline, psilocybin, 1-(2,5-dimethoxy-4-iodophenyl)-2-aminopropane (DOI) and lysergic acid diethylamide (LSD). Ligand binding causes a conformation change that triggers signaling via guanine nucleotide-binding proteins (G proteins) and modulates the activity of downstream effectors. HTR2A is coupled to G(q)/G(11) G alpha proteins and activates phospholipase C-beta, releasing diacylglycerol (DAG) and inositol 1,4,5-trisphosphate (IP3) second messengers that modulate the activity of phosphatidylinositol 3-kinase and promote the release of Ca(2+) ions from intracellular stores, respectively. Beta-arrestin family members inhibit signaling via G proteins and mediate activation of alternative signaling pathways. Affects neural activity, perception, cognition and mood. Plays a role in the regulation of behavior, including responses to anxiogenic situations and psychoactive substances. Plays a role in intestinal smooth muscle contraction, and may play a role in arterial vasoconstriction. The sequence is that of 5-hydroxytryptamine receptor 2A (Htr2a) from Mus musculus (Mouse).